The primary structure comprises 172 residues: NADH-quinone oxidoreductase subunit B (172 aa).

Cys-52, Cys-53, Cys-117, and Cys-147 together coordinate [4Fe-4S] cluster.

It belongs to the complex I 20 kDa subunit family. As to quaternary structure, NDH-1 is composed of 14 different subunits. Subunits NuoB, C, D, E, F, and G constitute the peripheral sector of the complex. Requires [4Fe-4S] cluster as cofactor.

The protein resides in the cell inner membrane. It catalyses the reaction a quinone + NADH + 5 H(+)(in) = a quinol + NAD(+) + 4 H(+)(out). Functionally, NDH-1 shuttles electrons from NADH, via FMN and iron-sulfur (Fe-S) centers, to quinones in the respiratory chain. Couples the redox reaction to proton translocation (for every two electrons transferred, four hydrogen ions are translocated across the cytoplasmic membrane), and thus conserves the redox energy in a proton gradient. This Ehrlichia ruminantium (strain Gardel) protein is NADH-quinone oxidoreductase subunit B.